Here is a 266-residue protein sequence, read N- to C-terminus: Phosphatidylglycerol--prolipoprotein diacylglyceryl transferase (266 aa).

4 consecutive transmembrane segments (helical) span residues phenylalanine 14–tryptophan 34, phenylalanine 55–tyrosine 75, tryptophan 91–phenylalanine 111, and valine 117–glycine 137. An a 1,2-diacyl-sn-glycero-3-phospho-(1'-sn-glycerol)-binding site is contributed by arginine 138. 3 consecutive transmembrane segments (helical) span residues tyrosine 172–phenylalanine 192, glycine 201–phenylalanine 221, and tryptophan 235–valine 255.

Belongs to the Lgt family.

Its subcellular location is the cell inner membrane. The enzyme catalyses L-cysteinyl-[prolipoprotein] + a 1,2-diacyl-sn-glycero-3-phospho-(1'-sn-glycerol) = an S-1,2-diacyl-sn-glyceryl-L-cysteinyl-[prolipoprotein] + sn-glycerol 1-phosphate + H(+). It functions in the pathway protein modification; lipoprotein biosynthesis (diacylglyceryl transfer). Catalyzes the transfer of the diacylglyceryl group from phosphatidylglycerol to the sulfhydryl group of the N-terminal cysteine of a prolipoprotein, the first step in the formation of mature lipoproteins. The chain is Phosphatidylglycerol--prolipoprotein diacylglyceryl transferase from Hydrogenovibrio crunogenus (strain DSM 25203 / XCL-2) (Thiomicrospira crunogena).